The chain runs to 399 residues: Phosphoglycerate kinase (399 aa).

Substrate is bound by residues 21–23, R36, 59–62, R120, and R158; these read DFN and HLGR. Residues K209, G297, E328, and 355-358 each bind ATP; that span reads GGDS.

This sequence belongs to the phosphoglycerate kinase family. In terms of assembly, monomer.

Its subcellular location is the cytoplasm. The catalysed reaction is (2R)-3-phosphoglycerate + ATP = (2R)-3-phospho-glyceroyl phosphate + ADP. Its pathway is carbohydrate degradation; glycolysis; pyruvate from D-glyceraldehyde 3-phosphate: step 2/5. The polypeptide is Phosphoglycerate kinase (Streptococcus thermophilus (strain ATCC BAA-491 / LMD-9)).